The sequence spans 509 residues: Protein disulfide-isomerase (509 aa).

An N-terminal signal peptide occupies residues 1–18; sequence MLRRAVLCLALAVTAGWA. A Thioredoxin 1 domain is found at 19–135; that stretch reads WAAEEEDNVL…IVNWLKKRTG (117 aa). Active-site nucleophile residues include Cys-54 and Cys-57. An intrachain disulfide couples Cys-54 to Cys-57. 2 positions are modified to N6-succinyllysine: Lys-223 and Lys-272. A phosphoserine mark is found at Ser-332 and Ser-358. Residues 347–476 form the Thioredoxin 2 domain; it reads FLEGKIKPHL…FKKFLESGGQ (130 aa). Residues Cys-398 and Cys-401 each act as nucleophile in the active site. Cysteines 398 and 401 form a disulfide. Position 428 is a phosphoserine (Ser-428). A disordered region spans residues 471–509; the sequence is LESGGQDGAGDEDGLEDLEEAEEPDLEEDDDQKAVRDEL. Residues 479 to 501 are compositionally biased toward acidic residues; that stretch reads AGDEDGLEDLEEAEEPDLEEDDD. Positions 506–509 match the Prevents secretion from ER motif; sequence RDEL.

Belongs to the protein disulfide isomerase family. Heterodimer; heterodimerizes with the protein microsomal triglyceride transfer MTTP. Homodimer. Monomers and homotetramers may also occur. Interacts with P4HA2, forming a heterotetramer consisting of 2 alpha subunits (P4HA2) and 2 beta (P4HB), where P4HB plays the role of a structural subunit; this tetramer catalyzes the formation of 4-hydroxyproline in collagen. Also constitutes the structural subunit of the microsomal triacylglycerol transfer protein MTTP in mammalian cells. Stabilizes both enzymes and retain them in the ER without contributing to the catalytic activity. Binds UBQLN1. Interacts with ERO1B. Interacts with ILDR2. Interacts with ERN1/IRE1A (via N-terminus); the interaction is enhanced by phosphorylation of P4HB by FAM20C in response to endoplasmic reticulum stress and results in attenuation of ERN1 activity. Phosphorylation of Ser-358 by FAM20C is induced by endoplasmic reticulum stress and results in a functional switch from oxidoreductase to molecular chaperone. It also promotes interaction with ERN1.

It is found in the endoplasmic reticulum. Its subcellular location is the endoplasmic reticulum lumen. It localises to the melanosome. The protein localises to the cell membrane. It catalyses the reaction Catalyzes the rearrangement of -S-S- bonds in proteins.. In terms of biological role, this multifunctional protein catalyzes the formation, breakage and rearrangement of disulfide bonds. At the cell surface, seems to act as a reductase that cleaves disulfide bonds of proteins attached to the cell. May therefore cause structural modifications of exofacial proteins. Inside the cell, seems to form/rearrange disulfide bonds of nascent proteins. At high concentrations and following phosphorylation by FAM20C, functions as a chaperone that inhibits aggregation of misfolded proteins. At low concentrations, facilitates aggregation (anti-chaperone activity). May be involved with other chaperones in the structural modification of the TG precursor in hormone biogenesis. Also acts as a structural subunit of various enzymes such as prolyl 4-hydroxylase and microsomal triacylglycerol transfer protein MTTP. Receptor for LGALS9; the interaction retains P4HB at the cell surface of Th2 T helper cells, increasing disulfide reductase activity at the plasma membrane, altering the plasma membrane redox state and enhancing cell migration. The sequence is that of Protein disulfide-isomerase (P4HB) from Oryctolagus cuniculus (Rabbit).